The primary structure comprises 232 residues: Putative membrane protein ORF8 (232 aa).

The segment covering 71–84 (GSSAASIPSAPTPD) has biased composition (low complexity). Residues 71–121 (GSSAASIPSAPTPDATRESPTGEPHRDRALSTETPTPEPSRDGGSTPEVLH) form a disordered region. The next 2 helical transmembrane spans lie at 166 to 182 (VFAR…GSVA) and 195 to 211 (LVVT…WVIV).

Its subcellular location is the membrane. The polypeptide is Putative membrane protein ORF8 (ORF8) (Ictalurid herpesvirus 1 (strain Auburn) (IcHV-1)).